Consider the following 291-residue polypeptide: Meteorin (291 aa).

Positions 1-21 (MLVATLLCALCCGLLAASAHA) are cleaved as a signal peptide. 5 cysteine pairs are disulfide-bonded: cysteine 28/cysteine 49, cysteine 80/cysteine 116, cysteine 169/cysteine 240, cysteine 172/cysteine 264, and cysteine 182/cysteine 286.

Belongs to the meteorin family. In terms of assembly, monomer. Highly expressed in brain. Expressed in undifferentiated neural progenitors and in astrocyte lineage, particularly in Bergmann glia, a subtype of radial glia, and a few discrete neuronal populations residing in the superior colliculus, the ocular motor nucleus, the raphe and pontine nuclei, and in various thalamic nuclei. Weakly expressed in heart, kidney, skeletal muscle, spleen, testis, gut and lung.

The protein localises to the secreted. Involved in both glial cell differentiation and axonal network formation during neurogenesis. Promotes astrocyte differentiation and transforms cerebellar astrocytes into radial glia. Also induces axonal extension in small and intermediate neurons of sensory ganglia by activating nearby satellite glia. The polypeptide is Meteorin (Metrn) (Mus musculus (Mouse)).